Reading from the N-terminus, the 353-residue chain is Nicotinate-nucleotide--dimethylbenzimidazole phosphoribosyltransferase (353 aa).

Glutamate 318 acts as the Proton acceptor in catalysis.

The protein belongs to the CobT family.

It catalyses the reaction 5,6-dimethylbenzimidazole + nicotinate beta-D-ribonucleotide = alpha-ribazole 5'-phosphate + nicotinate + H(+). It functions in the pathway nucleoside biosynthesis; alpha-ribazole biosynthesis; alpha-ribazole from 5,6-dimethylbenzimidazole: step 1/2. Its function is as follows. Catalyzes the synthesis of alpha-ribazole-5'-phosphate from nicotinate mononucleotide (NAMN) and 5,6-dimethylbenzimidazole (DMB). The polypeptide is Nicotinate-nucleotide--dimethylbenzimidazole phosphoribosyltransferase (Desulforudis audaxviator (strain MP104C)).